Reading from the N-terminus, the 428-residue chain is D-amino acid dehydrogenase (428 aa).

V3–Y17 serves as a coordination point for FAD.

Belongs to the DadA oxidoreductase family. Requires FAD as cofactor.

The enzyme catalyses a D-alpha-amino acid + A + H2O = a 2-oxocarboxylate + AH2 + NH4(+). It participates in amino-acid degradation; D-alanine degradation; NH(3) and pyruvate from D-alanine: step 1/1. Functionally, oxidative deamination of D-amino acids. The polypeptide is D-amino acid dehydrogenase (Paraburkholderia phytofirmans (strain DSM 17436 / LMG 22146 / PsJN) (Burkholderia phytofirmans)).